The chain runs to 123 residues: Glycine cleavage system H protein (123 aa).

The Lipoyl-binding domain occupies 22–104 (VATVGITSYA…FGAGWLVKVR (83 aa)). Lysine 63 is subject to N6-lipoyllysine.

It belongs to the GcvH family. The glycine cleavage system is composed of four proteins: P, T, L and H. It depends on (R)-lipoate as a cofactor.

In terms of biological role, the glycine cleavage system catalyzes the degradation of glycine. The H protein shuttles the methylamine group of glycine from the P protein to the T protein. The sequence is that of Glycine cleavage system H protein from Clavibacter sepedonicus (Clavibacter michiganensis subsp. sepedonicus).